The primary structure comprises 327 residues: MQRRHFIARAGIAAATAALGLAAMPAQAQADKFPQRPIRLVIGYTAGGSTDIPFRVLADNASKILGQPVIVENKPGAGGVLPAQMMQSTAPDGYTLAQVAMPVYRLPYTTKINWDPVKDLNYIINLAGYSFGLVVPADSPIKTMQEYIAYAKANPGKLTYGSPGSMTTLHLTMEELAMKQGVQFSHIPYKGNSESMQALLGGHVMSVADTPAWAPYVEQGKLRLLSTWGEKRSARFPSVPTLKELGIGIVQTSPFGLVAPKGTDPKIVQKLHDAFKKAMDMPNYRESLAKFDMEPYYMNSQQYAQFAAETVKKEKAIIEKLGLAKAQ.

Residues 1 to 30 constitute a signal peptide (tat-type signal); sequence MQRRHFIARAGIAAATAALGLAAMPAQAQA.

This sequence belongs to the UPF0065 (bug) family. Post-translationally, predicted to be exported by the Tat system. The position of the signal peptide cleavage has not been experimentally proven.

It localises to the periplasm. The chain is UPF0065 protein in gbd 5'region from Cupriavidus necator (Alcaligenes eutrophus).